The chain runs to 196 residues: Ribosome maturation factor RimP (196 aa).

The protein belongs to the RimP family.

The protein resides in the cytoplasm. In terms of biological role, required for maturation of 30S ribosomal subunits. The chain is Ribosome maturation factor RimP from Lawsonia intracellularis (strain PHE/MN1-00).